A 443-amino-acid chain; its full sequence is ATP-dependent protease ATPase subunit HslU (443 aa).

ATP-binding positions include Ile-18, 60-65 (GVGKTE), Asp-256, Glu-321, and Arg-393.

This sequence belongs to the ClpX chaperone family. HslU subfamily. As to quaternary structure, a double ring-shaped homohexamer of HslV is capped on each side by a ring-shaped HslU homohexamer. The assembly of the HslU/HslV complex is dependent on binding of ATP.

It localises to the cytoplasm. In terms of biological role, ATPase subunit of a proteasome-like degradation complex; this subunit has chaperone activity. The binding of ATP and its subsequent hydrolysis by HslU are essential for unfolding of protein substrates subsequently hydrolyzed by HslV. HslU recognizes the N-terminal part of its protein substrates and unfolds these before they are guided to HslV for hydrolysis. The chain is ATP-dependent protease ATPase subunit HslU from Pectobacterium carotovorum subsp. carotovorum (strain PC1).